The sequence spans 334 residues: RNA polymerase sigma factor RpoS (334 aa).

Residues 21 to 50 (PGIMLDESSADEQPSPRATPKATTSFSSKQ) are disordered. Residues 61 to 94 (DATQLYLNEIGFSPLLTPEEEVHFARLAQKGDPA) are sigma-70 factor domain-1. The sigma-70 factor domain-2 stretch occupies residues 99–169 (MIESNLRLVV…ERAIMNQTRT (71 aa)). An Interaction with polymerase core subunit RpoC motif is present at residues 123 to 126 (DLIE). The segment at 179–254 (ELNVYLRAAR…DDRPTDPCEL (76 aa)) is sigma-70 factor domain-3. Residues 267–320 (WLTELTDKQREVVIRRFGLRGHESSTLEEVGQEIGLTRERVRQIQVEALKRLRE) are sigma-70 factor domain-4. Residues 293 to 312 (LEEVGQEIGLTRERVRQIQV) constitute a DNA-binding region (H-T-H motif).

It belongs to the sigma-70 factor family. RpoS subfamily. In terms of assembly, interacts with the RNA polymerase core enzyme.

The protein localises to the cytoplasm. Sigma factors are initiation factors that promote the attachment of RNA polymerase to specific initiation sites and are then released. This sigma factor is the master transcriptional regulator of the stationary phase and the general stress response. This is RNA polymerase sigma factor RpoS from Pseudomonas aeruginosa (strain ATCC 15692 / DSM 22644 / CIP 104116 / JCM 14847 / LMG 12228 / 1C / PRS 101 / PAO1).